Reading from the N-terminus, the 819-residue chain is Lon protease (819 aa).

A compositionally biased stretch (polar residues) spans 1–14 (MNSTNNTDSQNLDP). The segment at 1-40 (MNSTNNTDSQNLDPNASEVEKLLDESAEAEEKVDDHTPPS) is disordered. A compositionally biased stretch (basic and acidic residues) spans 18-38 (EVEKLLDESAEAEEKVDDHTP). The Lon N-terminal domain maps to 42-239 (LFILPLNKRP…KALVLLKKEL (198 aa)). ATP is bound at residue 392–399 (GPPGVGKT). The Lon proteolytic domain maps to 634–818 (KTPVGVATGL…DDVFKIAFPG (185 aa)). Residues S724 and K767 contribute to the active site.

The protein belongs to the peptidase S16 family. Homohexamer. Organized in a ring with a central cavity.

The protein resides in the cytoplasm. The enzyme catalyses Hydrolysis of proteins in presence of ATP.. Its function is as follows. ATP-dependent serine protease that mediates the selective degradation of mutant and abnormal proteins as well as certain short-lived regulatory proteins. Required for cellular homeostasis and for survival from DNA damage and developmental changes induced by stress. Degrades polypeptides processively to yield small peptide fragments that are 5 to 10 amino acids long. Binds to DNA in a double-stranded, site-specific manner. This Chlamydia trachomatis serovar D (strain ATCC VR-885 / DSM 19411 / UW-3/Cx) protein is Lon protease.